Reading from the N-terminus, the 120-residue chain is NAD(P)H-quinone oxidoreductase subunit 3, chloroplastic (120 aa).

Helical transmembrane passes span 11 to 31 (VVFF…SKLI), 65 to 85 (FALI…WAIV), and 89 to 109 (LGIT…IGLV).

It belongs to the complex I subunit 3 family. In terms of assembly, NDH is composed of at least 16 different subunits, 5 of which are encoded in the nucleus.

Its subcellular location is the plastid. It is found in the chloroplast thylakoid membrane. The catalysed reaction is a plastoquinone + NADH + (n+1) H(+)(in) = a plastoquinol + NAD(+) + n H(+)(out). It carries out the reaction a plastoquinone + NADPH + (n+1) H(+)(in) = a plastoquinol + NADP(+) + n H(+)(out). Functionally, NDH shuttles electrons from NAD(P)H:plastoquinone, via FMN and iron-sulfur (Fe-S) centers, to quinones in the photosynthetic chain and possibly in a chloroplast respiratory chain. The immediate electron acceptor for the enzyme in this species is believed to be plastoquinone. Couples the redox reaction to proton translocation, and thus conserves the redox energy in a proton gradient. The polypeptide is NAD(P)H-quinone oxidoreductase subunit 3, chloroplastic (Mesostigma viride (Green alga)).